The chain runs to 122 residues: UPF0102 protein XAC0764 (122 aa).

This sequence belongs to the UPF0102 family.

The polypeptide is UPF0102 protein XAC0764 (Xanthomonas axonopodis pv. citri (strain 306)).